We begin with the raw amino-acid sequence, 155 residues long: D-aminoacyl-tRNA deacylase (155 aa).

The short motif at 137-138 is the Gly-cisPro motif, important for rejection of L-amino acids element; it reads GP.

The protein belongs to the DTD family. As to quaternary structure, homodimer.

The protein resides in the cytoplasm. It carries out the reaction glycyl-tRNA(Ala) + H2O = tRNA(Ala) + glycine + H(+). The enzyme catalyses a D-aminoacyl-tRNA + H2O = a tRNA + a D-alpha-amino acid + H(+). Its function is as follows. An aminoacyl-tRNA editing enzyme that deacylates mischarged D-aminoacyl-tRNAs. Also deacylates mischarged glycyl-tRNA(Ala), protecting cells against glycine mischarging by AlaRS. Acts via tRNA-based rather than protein-based catalysis; rejects L-amino acids rather than detecting D-amino acids in the active site. By recycling D-aminoacyl-tRNA to D-amino acids and free tRNA molecules, this enzyme counteracts the toxicity associated with the formation of D-aminoacyl-tRNA entities in vivo and helps enforce protein L-homochirality. The polypeptide is D-aminoacyl-tRNA deacylase (Nitrosococcus oceani (strain ATCC 19707 / BCRC 17464 / JCM 30415 / NCIMB 11848 / C-107)).